The primary structure comprises 465 residues: VGFKAGVKDYKLTYYTPDYETKDTDILAAFRVTPQPGVPPEEAGAAVAAESSTGTWTTVWTDGLTSLDRYKGRCYHIEPVAGEENQYIAYVAYPLDLFEEGSVTNMFTSIVGNVFGFKALRALRLEDLRIPISYIKTFQGPPHGIQVERDKLNKYGRPLLGCTIKPKLGLSAKNYGRAVYECLRGGLDFTKDDENVNSQPFMRWRDRFCFCAEALYKAQAETGEIKGHYLNATAGTCEEMIKRAVFARELGVPIVMHDYLTGGFTANTTLAHYCRDNGLLLHIHRAMHAVIDRQKNHGMHFRVLAKALRLSGGDHIHAGTVVGKLEGEREITLGFVDLLRDDFIEKDRSRGIYFTQDWVSLPGVLPVASGGIHVWHMPALTEIFGDDSVLQFGGGTLGHPWGNAPGAVANRVALEACVQARNEGRDLAREGNEIIREASKWSPELAAACEVWKEIKFEFPAMDTL.

The residue at position 4 (Lys4) is an N6,N6,N6-trimethyllysine. Positions 113 and 163 each coordinate substrate. Catalysis depends on Lys165, which acts as the Proton acceptor. Lys167 provides a ligand contact to substrate. Mg(2+)-binding residues include Lys191, Asp193, and Glu194. Lys191 carries the N6-carboxylysine modification. His284 serves as the catalytic Proton acceptor. Residues Arg285, His317, and Ser369 each coordinate substrate.

It belongs to the RuBisCO large chain family. Type I subfamily. As to quaternary structure, heterohexadecamer of 8 large chains and 8 small chains; disulfide-linked. The disulfide link is formed within the large subunit homodimers. Mg(2+) is required as a cofactor. Post-translationally, the disulfide bond which can form in the large chain dimeric partners within the hexadecamer appears to be associated with oxidative stress and protein turnover.

It is found in the plastid. It localises to the chloroplast. It catalyses the reaction 2 (2R)-3-phosphoglycerate + 2 H(+) = D-ribulose 1,5-bisphosphate + CO2 + H2O. The enzyme catalyses D-ribulose 1,5-bisphosphate + O2 = 2-phosphoglycolate + (2R)-3-phosphoglycerate + 2 H(+). Its function is as follows. RuBisCO catalyzes two reactions: the carboxylation of D-ribulose 1,5-bisphosphate, the primary event in carbon dioxide fixation, as well as the oxidative fragmentation of the pentose substrate in the photorespiration process. Both reactions occur simultaneously and in competition at the same active site. The sequence is that of Ribulose bisphosphate carboxylase large chain from Cassia fistula (Golden shower tree).